The following is a 368-amino-acid chain: UPF0284 protein PCC8801_3324 (368 aa).

The protein belongs to the UPF0284 family.

This chain is UPF0284 protein PCC8801_3324, found in Rippkaea orientalis (strain PCC 8801 / RF-1) (Cyanothece sp. (strain PCC 8801)).